The chain runs to 153 residues: uncharacterized protein (153 aa).

Positions 1–22 are cleaved as a signal peptide; sequence MKMLKKGTAVLFVMIMAVMLVA. The N-palmitoyl cysteine moiety is linked to residue Cys-23. Residue Cys-23 is the site of S-diacylglycerol cysteine attachment. The disordered stretch occupies residues 117 to 153; it reads DMNKIPGMSSNGDTSKGISMEESAKMLESQGYKEVSK. Positions 124–133 are enriched in polar residues; that stretch reads MSSNGDTSKG.

It to E.coli YehR.

The protein resides in the cell membrane. This is an uncharacterized protein from Listeria monocytogenes serovar 1/2a (strain ATCC BAA-679 / EGD-e).